The sequence spans 326 residues: Fructokinase (326 aa).

Residues 275-326 form a disordered region; it reads EQALRNGPDPRRQSRRRHRLPRRRQSTLGARDWSLRLEQDSDPHPPDDTFSP. The span at 287-299 shows a compositional bias: basic residues; that stretch reads QSRRRHRLPRRRQ. Positions 307-326 are enriched in basic and acidic residues; the sequence is WSLRLEQDSDPHPPDDTFSP.

The protein belongs to the carbohydrate kinase PfkB family.

It catalyses the reaction D-fructose + ATP = D-fructose 6-phosphate + ADP + H(+). This is Fructokinase (frk) from Rhizobium leguminosarum bv. trifolii.